The chain runs to 301 residues: Rhodopsin (301 aa).

The Extracellular portion of the chain corresponds to 1 to 18 (LHMIHLHWYQYPPMNPIM). A helical membrane pass occupies residues 19–43 (YPLLLVFMLITGILCLAGNFVTIWV). At 44-55 (FMNTKSLRTPAN) the chain is on the cytoplasmic side. The helical transmembrane segment at 56 to 78 (LLVVNLAMSDFLMMFTMFPPMMI) threads the bilayer. The Extracellular segment spans residues 79–92 (TCYYHTWTLGATFC). A disulfide bond links cysteine 92 and cysteine 169. The helical transmembrane segment at 93–115 (QVYAFLGNLCGCASIWTMVFITF) threads the bilayer. The 'Ionic lock' involved in activated form stabilization motif lies at 116–118 (DRY). Residues 116–134 (DRYNVIVKGVAGEPLSTKK) lie on the Cytoplasmic side of the membrane. A helical membrane pass occupies residues 135 to 155 (ATLWILTIWILSTTWCVAPFF). Residues 156–182 (GWNRYVPEGNLTGCGTDYLSQDILSRS) lie on the Extracellular side of the membrane. N-linked (GlcNAc...) asparagine glycosylation occurs at asparagine 165. The chain crosses the membrane as a helical span at residues 183-204 (YLYIYSTWVYFLPLAITIYCYV). Over 205–245 (VIIKAVAAHEKGMRDQAKKMGIKSLRNEEAQKTSAECRLAK) the chain is Cytoplasmic. Residues 246–267 (IAMTTVALWFIAWTPYLLINWV) form a helical membrane-spanning segment. Residues 268 to 278 (GMFARSYLSPV) lie on the Extracellular side of the membrane. A helical membrane pass occupies residues 279 to 300 (YTIWGYVFAKANAVYNPIVYAI). The residue at position 288 (lysine 288) is an N6-(retinylidene)lysine.

Belongs to the G-protein coupled receptor 1 family. Opsin subfamily. As to quaternary structure, homodimer. Interacts with GNAQ. Post-translationally, contains one covalently linked retinal chromophore.

Its subcellular location is the cell projection. The protein resides in the rhabdomere membrane. Its function is as follows. Photoreceptor required for image-forming vision at low light intensity. Can use both retinal and 3-dehydroretinal as visual pigment. Light-induced isomerization of 11-cis to all-trans retinal triggers a conformational change that activates signaling via G-proteins. Signaling via GNAQ probably mediates the activation of phospholipase C. The chain is Rhodopsin (RHO) from Orconectes australis (Southern cave crayfish).